We begin with the raw amino-acid sequence, 250 residues long: Prophage antitermination protein Q homolog QuuQ (250 aa).

Belongs to the phage antitermination Q type 2 family.

Its function is as follows. Positively regulate expression of some phage genes. Bacterial host RNA polymerase modified by antitermination proteins transcribes through termination sites that otherwise prevent expression of the regulated genes. The protein is Prophage antitermination protein Q homolog QuuQ (quuQ) of Escherichia coli (strain K12).